Reading from the N-terminus, the 518-residue chain is Gypsy retrotransposon integrase-like protein 1 (518 aa).

An Integrase catalytic domain is found at 130–292 (QQHLPMVGNP…TPYFQMFNRN (163 aa)). Ser-498 carries the phosphoserine modification.

The polypeptide is Gypsy retrotransposon integrase-like protein 1 (Gin1) (Mus musculus (Mouse)).